The chain runs to 261 residues: CD40 ligand (261 aa).

Over 1–22 (MIETYSQPSPRSVATGPPVSMK) the chain is Cytoplasmic. Residues 23–46 (IFMYLLTVFLITQMIGSALFAVYL) form a helical; Signal-anchor for type II membrane protein membrane-spanning segment. The Extracellular portion of the chain corresponds to 47 to 261 (HRRLDKIEDE…GFTSFGLLKL (215 aa)). The 140-residue stretch at 122 to 261 (IAAHVISEAS…GFTSFGLLKL (140 aa)) folds into the THD domain. Residues C178 and C218 are joined by a disulfide bond. N-linked (GlcNAc...) asparagine glycosylation is present at N240.

The protein belongs to the tumor necrosis factor family. Homotrimer. Interacts with CD28. CD40 ligand, soluble form: Exists as either a monomer or a homotrimer. Forms a ternary complex between CD40 and integrins for CD40-CD40LG signaling. In terms of processing, the soluble form derives from the membrane form by proteolytic processing.

It localises to the cell membrane. It is found in the cell surface. Its subcellular location is the secreted. In terms of biological role, cytokine that acts as a ligand to CD40/TNFRSF5. Costimulates T-cell proliferation and cytokine production. Its cross-linking on T-cells generates a costimulatory signal which enhances the production of IL4 and IL10 in conjunction with the TCR/CD3 ligation and CD28 costimulation. Induces the activation of NF-kappa-B. Induces the activation of kinases MAPK8 and PAK2 in T-cells. Mediates B-cell proliferation in the absence of co-stimulus as well as IgE production in the presence of IL4. Involved in immunoglobulin class switching. Functionally, acts as a ligand for integrins, specifically ITGA5:ITGB1 and ITGAV:ITGB3; both integrins and the CD40 receptor are required for activation of CD40-CD40LG signaling, which have cell-type dependent effects, such as B-cell activation, NF-kappa-B signaling and anti-apoptotic signaling. The polypeptide is CD40 ligand (CD40LG) (Bos taurus (Bovine)).